The chain runs to 324 residues: Porphobilinogen deaminase (324 aa).

Position 246 is an S-(dipyrrolylmethanemethyl)cysteine (C246). An insert region spans residues 261–279 (GQAPEEGGRAAASQAPAAL).

This sequence belongs to the HMBS family. In terms of assembly, monomer. Dipyrromethane is required as a cofactor.

It catalyses the reaction 4 porphobilinogen + H2O = hydroxymethylbilane + 4 NH4(+). It functions in the pathway porphyrin-containing compound metabolism; protoporphyrin-IX biosynthesis; coproporphyrinogen-III from 5-aminolevulinate: step 2/4. Its function is as follows. Tetrapolymerization of the monopyrrole PBG into the hydroxymethylbilane pre-uroporphyrinogen in several discrete steps. The chain is Porphobilinogen deaminase (hemC) from Paenibacillus macerans (Bacillus macerans).